A 478-amino-acid chain; its full sequence is Glutamate--tRNA ligase 1 (478 aa).

The 'HIGH' region signature appears at 10 to 20 (PSPTGFLHIGG). The 'KMSKS' region motif lies at 242-246 (KLSKR). Residue lysine 245 participates in ATP binding.

The protein belongs to the class-I aminoacyl-tRNA synthetase family. Glutamate--tRNA ligase type 1 subfamily. Monomer.

It is found in the cytoplasm. It carries out the reaction tRNA(Glu) + L-glutamate + ATP = L-glutamyl-tRNA(Glu) + AMP + diphosphate. In terms of biological role, catalyzes the attachment of glutamate to tRNA(Glu) in a two-step reaction: glutamate is first activated by ATP to form Glu-AMP and then transferred to the acceptor end of tRNA(Glu). The chain is Glutamate--tRNA ligase 1 from Orientia tsutsugamushi (strain Boryong) (Rickettsia tsutsugamushi).